Consider the following 434-residue polypeptide: Ribosomal protein uS12 methylthiotransferase RimO (434 aa).

In terms of domain architecture, MTTase N-terminal spans 4–122 (NRVDVITLGC…LISHLGKSYY (119 aa)). [4Fe-4S] cluster contacts are provided by Cys13, Cys51, Cys85, Cys146, Cys150, and Cys153. Residues 132-363 (TTPRHYAYLK…MAVQERISAA (232 aa)) form the Radical SAM core domain. The region spanning 366-434 (EAKIGSRLRV…PFDLYARIVD (69 aa)) is the TRAM domain.

It belongs to the methylthiotransferase family. RimO subfamily. The cofactor is [4Fe-4S] cluster.

The protein resides in the cytoplasm. The catalysed reaction is L-aspartate(89)-[ribosomal protein uS12]-hydrogen + (sulfur carrier)-SH + AH2 + 2 S-adenosyl-L-methionine = 3-methylsulfanyl-L-aspartate(89)-[ribosomal protein uS12]-hydrogen + (sulfur carrier)-H + 5'-deoxyadenosine + L-methionine + A + S-adenosyl-L-homocysteine + 2 H(+). Catalyzes the methylthiolation of an aspartic acid residue of ribosomal protein uS12. The polypeptide is Ribosomal protein uS12 methylthiotransferase RimO (Porphyromonas gingivalis (strain ATCC 33277 / DSM 20709 / CIP 103683 / JCM 12257 / NCTC 11834 / 2561)).